We begin with the raw amino-acid sequence, 115 residues long: Ribonuclease P protein component (115 aa).

It belongs to the RnpA family. Consists of a catalytic RNA component (M1 or rnpB) and a protein subunit.

The enzyme catalyses Endonucleolytic cleavage of RNA, removing 5'-extranucleotides from tRNA precursor.. In terms of biological role, RNaseP catalyzes the removal of the 5'-leader sequence from pre-tRNA to produce the mature 5'-terminus. It can also cleave other RNA substrates such as 4.5S RNA. The protein component plays an auxiliary but essential role in vivo by binding to the 5'-leader sequence and broadening the substrate specificity of the ribozyme. The protein is Ribonuclease P protein component of Bacillus cereus (strain ATCC 10987 / NRS 248).